The sequence spans 200 residues: MRIILLGPPGAGKGTQSERIVERYRVPQLSTGDMLRAAVAAETPVGLEAKAIMESGGLVSDAIVVGIVADRIEEADAKNGFILDGFPRTVEQAKALDAMLAQKGIALDAVVEFVVDETALVGRIAKRAEETAARGQPVRKDDTPEVFKTRLDAYRKQTAPLSDYYAGTGLLRKIDGMKPIDVVTGDVTALLEGFRETASS.

10–15 (GAGKGT) serves as a coordination point for ATP. The interval 30–59 (STGDMLRAAVAAETPVGLEAKAIMESGGLV) is NMP. Residues threonine 31, arginine 36, 57–59 (GLV), 85–88 (GFPR), and glutamine 92 each bind AMP. The interval 126–142 (KRAEETAARGQPVRKDD) is LID. Residue arginine 127 coordinates ATP. AMP contacts are provided by arginine 139 and arginine 150. Lysine 178 provides a ligand contact to ATP.

The protein belongs to the adenylate kinase family. In terms of assembly, monomer.

Its subcellular location is the cytoplasm. The enzyme catalyses AMP + ATP = 2 ADP. It functions in the pathway purine metabolism; AMP biosynthesis via salvage pathway; AMP from ADP: step 1/1. Catalyzes the reversible transfer of the terminal phosphate group between ATP and AMP. Plays an important role in cellular energy homeostasis and in adenine nucleotide metabolism. This is Adenylate kinase from Methylorubrum extorquens (strain CM4 / NCIMB 13688) (Methylobacterium extorquens).